The sequence spans 87 residues: DNA-directed RNA polymerase subunit omega (87 aa).

The protein belongs to the RNA polymerase subunit omega family. The RNAP catalytic core consists of 2 alpha, 1 beta, 1 beta' and 1 omega subunit. When a sigma factor is associated with the core the holoenzyme is formed, which can initiate transcription.

The catalysed reaction is RNA(n) + a ribonucleoside 5'-triphosphate = RNA(n+1) + diphosphate. In terms of biological role, promotes RNA polymerase assembly. Latches the N- and C-terminal regions of the beta' subunit thereby facilitating its interaction with the beta and alpha subunits. In Pseudomonas putida (strain W619), this protein is DNA-directed RNA polymerase subunit omega.